We begin with the raw amino-acid sequence, 279 residues long: Large ribosomal subunit protein uL2 (279 aa).

2 disordered regions span residues methionine 1–lysine 59 and valine 224–arginine 279. 2 stretches are compositionally biased toward basic residues: residues threonine 50–lysine 59 and valine 269–arginine 279.

The protein belongs to the universal ribosomal protein uL2 family. As to quaternary structure, part of the 50S ribosomal subunit. Forms a bridge to the 30S subunit in the 70S ribosome.

Functionally, one of the primary rRNA binding proteins. Required for association of the 30S and 50S subunits to form the 70S ribosome, for tRNA binding and peptide bond formation. It has been suggested to have peptidyltransferase activity; this is somewhat controversial. Makes several contacts with the 16S rRNA in the 70S ribosome. This is Large ribosomal subunit protein uL2 from Arthrobacter sp. (strain FB24).